Consider the following 148-residue polypeptide: Small ribosomal subunit protein bS16 (148 aa).

A disordered region spans residues 107–148; sequence AAARAAAGAEDRPATTPKKAKKAASADGADAPAADAPTAAGQ. The segment covering 129-148 has biased composition (low complexity); it reads AASADGADAPAADAPTAAGQ.

It belongs to the bacterial ribosomal protein bS16 family.

This is Small ribosomal subunit protein bS16 from Frankia alni (strain DSM 45986 / CECT 9034 / ACN14a).